A 227-amino-acid polypeptide reads, in one-letter code: Cytidylate kinase (227 aa).

Residue 12–20 (GPSGAGKGT) coordinates ATP.

It belongs to the cytidylate kinase family. Type 1 subfamily.

It localises to the cytoplasm. It catalyses the reaction CMP + ATP = CDP + ADP. The catalysed reaction is dCMP + ATP = dCDP + ADP. The protein is Cytidylate kinase of Salmonella paratyphi B (strain ATCC BAA-1250 / SPB7).